The chain runs to 179 residues: ATP synthase subunit delta (179 aa).

Belongs to the ATPase delta chain family. F-type ATPases have 2 components, F(1) - the catalytic core - and F(0) - the membrane proton channel. F(1) has five subunits: alpha(3), beta(3), gamma(1), delta(1), epsilon(1). F(0) has three main subunits: a(1), b(2) and c(10-14). The alpha and beta chains form an alternating ring which encloses part of the gamma chain. F(1) is attached to F(0) by a central stalk formed by the gamma and epsilon chains, while a peripheral stalk is formed by the delta and b chains.

The protein localises to the cell inner membrane. Functionally, f(1)F(0) ATP synthase produces ATP from ADP in the presence of a proton or sodium gradient. F-type ATPases consist of two structural domains, F(1) containing the extramembraneous catalytic core and F(0) containing the membrane proton channel, linked together by a central stalk and a peripheral stalk. During catalysis, ATP synthesis in the catalytic domain of F(1) is coupled via a rotary mechanism of the central stalk subunits to proton translocation. This protein is part of the stalk that links CF(0) to CF(1). It either transmits conformational changes from CF(0) to CF(1) or is implicated in proton conduction. The protein is ATP synthase subunit delta of Paraburkholderia xenovorans (strain LB400).